The following is a 752-amino-acid chain: MGPLMVLFCLLFLYPGLADSAPSCPQNVNISGGTFTLSHGWAPGSLLTYSCPQGLYPSPASRLCKSSGQWQTPGATRSLSKAVCKPVRCPAPVSFENGIYTPRLGSYPVGGNVSFECEDGFILRGSPVRQCRPNGMWDGETAVCDNGAGHCPNPGISLGAVRTGFRFGHGDKVRYRCSSNLVLTGSSERECQGNGVWSGTEPICRQPYSYDFPEDVAPALGTSFSHMLGATNPTQKTKESLGRKIQIQRSGHLNLYLLLDCSQSVSENDFLIFKESASLMVDRIFSFEINVSVAIITFASEPKVLMSVLNDNSRDMTEVISSLENANYKDHENGTGTNTYAALNSVYLMMNNQMRLLGMETMAWQEIRHAIILLTDGKSNMGGSPKTAVDHIREILNINQKRNDYLDIYAIGVGKLDVDWRELNELGSKKDGERHAFILQDTKALHQVFEHMLDVSKLTDTICGVGNMSANASDQERTPWHVTIKPKSQETCRGALISDQWVLTAAHCFRDGNDHSLWRVNVGDPKSQWGKEFLIEKAVISPGFDVFAKKNQGILEFYGDDIALLKLAQKVKMSTHARPICLPCTMEANLALRRPQGSTCRDHENELLNKQSVPAHFVALNGSKLNINLKMGVEWTSCAEVVSQEKTMFPNLTDVREVVTDQFLCSGTQEDESPCKGESGGAVFLERRFRFFQVGLVSWGLYNPCLGSADKNSRKRAPRSKVPPPRDFHINLFRMQPWLRQHLGDVLNFLPL.

Residues 1–20 (MGPLMVLFCLLFLYPGLADS) form the signal peptide. Sushi domains follow at residues 22–86 (PSCP…VCKP), 87–146 (VRCP…VCDN), and 149–206 (GHCP…ICRQ). 6 disulfides stabilise this stretch: C24/C64, C51/C84, C89/C131, C117/C144, C151/C191, and C177/C204. A glycan (N-linked (GlcNAc...) asparagine) is linked at N29. N112 carries N-linked (GlcNAc...) asparagine glycosylation. Residues 254-452 (NLYLLLDCSQ…KALHQVFEHM (199 aa)) enclose the VWFA domain. An MIDAS-like motif motif is present at residues 260-264 (DCSQS). S262 and S264 together coordinate Mg(2+). Mn(2+) contacts are provided by S262 and S264. N-linked (GlcNAc...) asparagine glycosylation is found at N290 and N333. Mg(2+) is bound at residue T337. T337 contributes to the Mn(2+) binding site. Disulfide bonds link C463-C581, C492-C508, and C584-C600. The Peptidase S1 domain occupies 464-744 (GVGNMSANAS…MQPWLRQHLG (281 aa)). N467 and N471 each carry an N-linked (GlcNAc...) asparagine glycan. Catalysis depends on charge relay system residues H507 and D561. N621 is a glycosylation site (N-linked (GlcNAc...) asparagine). 2 disulfide bridges follow: C638-C665 and C675-C705. A glycan (N-linked (GlcNAc...) (complex) asparagine) is linked at N651. The active-site Charge relay system is the S679.

The protein belongs to the peptidase S1 family. Serine protease component of the C3 convertase, also named C4bC2b, composed of the serine protease complement C2b and complement C4b. Serine protease component of the C5 convertase, also named C4bC2bC3b, composed of the serine protease complement C2b, complement C3b, as well as complement C4b. In terms of assembly, (Microbial infection) Interacts with Schistosoma haematobium TOR (via N-terminal extracellular domain). This results in inhibition of the classical and lectin pathway of complement activation, probably due to interference with binding of C2a to C4b such that C3 convertase cannot be formed. This infers resistance to complement-mediated cell lysis, allowing parasite survival and infection. Mg(2+) is required as a cofactor. It depends on Mn(2+) as a cofactor. Cleaved and activated by different proteases depending on the complement pathway to generate complement C2a and serine protease complement C2b chains. Cleaved and activated by C1S following activation by the classical complement system. Cleaved and activated by MASP2 following activation by the lectin complement system. Cleaved and activated by GZMK following activation by the GZMK complement system.

The protein localises to the secreted. The protein resides in the cell surface. It carries out the reaction Selective cleavage of Arg-|-Ser bond in complement component C3 alpha-chain to form C3a and C3b, and Arg-|-Xaa bond in complement component C5 alpha-chain to form C5a and C5b.. Precursor of the catalytic component of the C3 and C5 convertase complexes, which are part of the complement pathway, a cascade of proteins that leads to phagocytosis and breakdown of pathogens and signaling that strengthens the adaptive immune system. Component C2 is part of the classical, lectin and GZMK complement systems. Functionally, catalytic component of the complement C3 and C5 convertase complexes. Following complement activation, recruited to the surface of pathogens by complement C4b opsonin to form the C3 convertase, or C3b and C4b opsonins to form the C5 convertase. As part of the C3 convertase, cleaves and activate C3 into C3a anaphylatoxin and C3b opsonin, the next components of the complement pathways. As part of the C5 convertase, cleaves and activate C5 into C5a anaphylatoxin and C5b component of the membrane attack complex. The polypeptide is Complement C2 (Homo sapiens (Human)).